The following is a 160-amino-acid chain: 3-hydroxyacyl-[acyl-carrier-protein] dehydratase FabZ (160 aa).

The active site involves His60.

Belongs to the thioester dehydratase family. FabZ subfamily.

It is found in the cytoplasm. The catalysed reaction is a (3R)-hydroxyacyl-[ACP] = a (2E)-enoyl-[ACP] + H2O. Its function is as follows. Involved in unsaturated fatty acids biosynthesis. Catalyzes the dehydration of short chain beta-hydroxyacyl-ACPs and long chain saturated and unsaturated beta-hydroxyacyl-ACPs. The polypeptide is 3-hydroxyacyl-[acyl-carrier-protein] dehydratase FabZ (Rhodospirillum rubrum (strain ATCC 11170 / ATH 1.1.1 / DSM 467 / LMG 4362 / NCIMB 8255 / S1)).